A 757-amino-acid chain; its full sequence is Cap-specific mRNA (nucleoside-2'-O-)-methyltransferase 1 (757 aa).

Residues 1–61 form a disordered region; the sequence is MFQSNQYDEY…EDDEEEEDTP (61 aa). 2 stretches are compositionally biased toward acidic residues: residues 18–32 and 40–59; these read EENE…NENE and GDQD…EEED. The 47-residue stretch at 62–108 folds into the G-patch domain; sequence KLSFGAKFLAKHGHIEGQGLGKEKDGRIDLIEVDRFQSTKGLGFAEN. One can recognise a RrmJ-type SAM-dependent 2'-O-MTase domain in the interval 214 to 438; sequence IFINRAAVKM…ERYIICKNFL (225 aa). S-adenosyl-L-methionine is bound by residues glycine 257, glutamate 301, and aspartate 352. The Proton acceptor role is filled by lysine 392. Residues 538–548 are compositionally biased toward basic residues; that stretch reads HKNRQKHHHNN. Residues 538–670 form a disordered region; the sequence is HKNRQKHHHN…NNNNNNNNKN (133 aa). The segment covering 549–569 has biased composition (low complexity); it reads HSNNNNNNNNSNNNNNNNNQH. The segment covering 570-581 has biased composition (basic residues); it reads QHQHHQHQHHQN. Low complexity predominate over residues 597 to 668; that stretch reads NNNINNNSNN…NNNNNNNNNN (72 aa).

The catalysed reaction is a 5'-end (N(7)-methyl 5'-triphosphoguanosine)-ribonucleoside in mRNA + S-adenosyl-L-methionine = a 5'-end (N(7)-methyl 5'-triphosphoguanosine)-(2'-O-methyl-ribonucleoside) in mRNA + S-adenosyl-L-homocysteine + H(+). Its function is as follows. S-adenosyl-L-methionine-dependent methyltransferase that mediates mRNA cap1 2'-O-ribose methylation to the 5'-cap structure of mRNAs. Methylates the ribose of the first nucleotide of a m(7)GpppG-capped mRNA to produce m(7)GpppNmp (cap1). Cap1 modification is linked to higher levels of translation. The chain is Cap-specific mRNA (nucleoside-2'-O-)-methyltransferase 1 from Dictyostelium discoideum (Social amoeba).